Reading from the N-terminus, the 553-residue chain is Cysteine desulfurase IscS (553 aa).

Low complexity predominate over residues 102-122 (NNISSNNTQYNNNSSNSGSLN). Positions 102-125 (NNISSNNTQYNNNSSNSGSLNDEG) are disordered.

It belongs to the class-V pyridoxal-phosphate-dependent aminotransferase family. NifS/IscS subfamily. In terms of assembly, homotetramer. Interacts with Isd11; the interaction enhances cysteine desulfurase activity of IscS. Interacts with IscU. Component of a complex, at least composed of IscS, Isd11 and IscU. Requires pyridoxal 5'-phosphate as cofactor.

The protein resides in the mitochondrion. It carries out the reaction (sulfur carrier)-H + L-cysteine = (sulfur carrier)-SH + L-alanine. It functions in the pathway cofactor biosynthesis; iron-sulfur cluster biosynthesis. Catalyzes sulfur activation and mobilization in iron-sulfur cluster formation (ISC) pathway for iron-sulfur (Fe-S) cluster biogenesis. Active when in complex with a partner protein Isd11. The protein is Cysteine desulfurase IscS of Plasmodium falciparum (isolate 3D7).